Consider the following 367-residue polypeptide: Histidinol-phosphate aminotransferase (367 aa).

Residue lysine 226 is modified to N6-(pyridoxal phosphate)lysine.

This sequence belongs to the class-II pyridoxal-phosphate-dependent aminotransferase family. Histidinol-phosphate aminotransferase subfamily. As to quaternary structure, homodimer. The cofactor is pyridoxal 5'-phosphate.

It catalyses the reaction L-histidinol phosphate + 2-oxoglutarate = 3-(imidazol-4-yl)-2-oxopropyl phosphate + L-glutamate. Its pathway is amino-acid biosynthesis; L-histidine biosynthesis; L-histidine from 5-phospho-alpha-D-ribose 1-diphosphate: step 7/9. The protein is Histidinol-phosphate aminotransferase of Aliarcobacter butzleri (strain RM4018) (Arcobacter butzleri).